The chain runs to 309 residues: Elongation factor Ts, mitochondrial (309 aa).

This sequence belongs to the EF-Ts family.

Its subcellular location is the mitochondrion. In terms of biological role, associates with the EF-Tu.GDP complex and induces the exchange of GDP to GTP. It remains bound to the aminoacyl-tRNA.EF-Tu.GTP complex up to the GTP hydrolysis stage on the ribosome. The protein is Elongation factor Ts, mitochondrial (tsfm) of Salmo salar (Atlantic salmon).